A 77-amino-acid chain; its full sequence is Acyl carrier protein (77 aa).

Residues 3-77 (QEIFEKVKKI…GKAVEHIESK (75 aa)) enclose the Carrier domain. An O-(pantetheine 4'-phosphoryl)serine modification is found at serine 38.

This sequence belongs to the acyl carrier protein (ACP) family. Post-translationally, 4'-phosphopantetheine is transferred from CoA to a specific serine of apo-ACP by AcpS. This modification is essential for activity because fatty acids are bound in thioester linkage to the sulfhydryl of the prosthetic group.

The protein localises to the cytoplasm. It participates in lipid metabolism; fatty acid biosynthesis. In terms of biological role, carrier of the growing fatty acid chain in fatty acid biosynthesis. The sequence is that of Acyl carrier protein from Synechocystis sp. (strain ATCC 27184 / PCC 6803 / Kazusa).